The chain runs to 229 residues: Orotidine 5'-phosphate decarboxylase (229 aa).

Substrate is bound by residues Asp-9, Lys-31, 58–67 (DLKLFDIPNT), Thr-121, Arg-179, Gln-188, Gly-208, and Arg-209. The active-site Proton donor is the Lys-60.

It belongs to the OMP decarboxylase family. Type 1 subfamily. In terms of assembly, homodimer.

It carries out the reaction orotidine 5'-phosphate + H(+) = UMP + CO2. Its pathway is pyrimidine metabolism; UMP biosynthesis via de novo pathway; UMP from orotate: step 2/2. Functionally, catalyzes the decarboxylation of orotidine 5'-monophosphate (OMP) to uridine 5'-monophosphate (UMP). The protein is Orotidine 5'-phosphate decarboxylase of Lawsonia intracellularis (strain PHE/MN1-00).